Consider the following 359-residue polypeptide: DNA integrity scanning protein DisA (359 aa).

A DAC domain is found at 7 to 145; the sequence is DPTGRAVLRA…DGRRWVLEDS (139 aa). Residues Gly-74, Leu-92, and 105–109 contribute to the ATP site; that span reads TRHRT.

Belongs to the DisA family. Homooctamer. The cofactor is Mg(2+).

It carries out the reaction 2 ATP = 3',3'-c-di-AMP + 2 diphosphate. Its function is as follows. Participates in a DNA-damage check-point. DisA forms globular foci that rapidly scan along the chromosomes searching for lesions. Also has diadenylate cyclase activity, catalyzing the condensation of 2 ATP molecules into cyclic di-AMP (c-di-AMP). c-di-AMP likely acts as a signaling molecule that may couple DNA integrity with a cellular process. The polypeptide is DNA integrity scanning protein DisA (Beutenbergia cavernae (strain ATCC BAA-8 / DSM 12333 / CCUG 43141 / JCM 11478 / NBRC 16432 / NCIMB 13614 / HKI 0122)).